Consider the following 161-residue polypeptide: Periplasmic chaperone Spy (161 aa).

An N-terminal signal peptide occupies residues 1 to 23 (MRKLTALFVASTLALGAANLAHA). The interval 140–161 (ANFEKRLTERPAAKGKMPATAE) is disordered. Positions 142–151 (FEKRLTERPA) are enriched in basic and acidic residues.

This sequence belongs to the CpxP/Spy family. As to quaternary structure, homodimer.

It localises to the periplasm. In terms of biological role, an ATP-independent periplasmic chaperone, decreases protein aggregation and helps protein refolding. Binds substrate over a large region of its convex inner surface. Substrate protein folds while it is bound to chaperone. Increasing Spy flexibility increases its substrate affinity and overall chaperone activity (shown for 3 different substrates). Protects proteins in vitro against tannin inactivation; tannins have antimicrobial activity. Overexpression enhances the stability of otherwise unstable periplasmic proteins. This chain is Periplasmic chaperone Spy, found in Escherichia coli (strain K12).